Here is a 448-residue protein sequence, read N- to C-terminus: Probable glycine dehydrogenase (decarboxylating) subunit 1 (448 aa).

The protein belongs to the GcvP family. N-terminal subunit subfamily. As to quaternary structure, the glycine cleavage system is composed of four proteins: P, T, L and H. In this organism, the P 'protein' is a heterodimer of two subunits.

It carries out the reaction N(6)-[(R)-lipoyl]-L-lysyl-[glycine-cleavage complex H protein] + glycine + H(+) = N(6)-[(R)-S(8)-aminomethyldihydrolipoyl]-L-lysyl-[glycine-cleavage complex H protein] + CO2. The glycine cleavage system catalyzes the degradation of glycine. The P protein binds the alpha-amino group of glycine through its pyridoxal phosphate cofactor; CO(2) is released and the remaining methylamine moiety is then transferred to the lipoamide cofactor of the H protein. The polypeptide is Probable glycine dehydrogenase (decarboxylating) subunit 1 (Listeria monocytogenes serotype 4b (strain F2365)).